A 229-amino-acid chain; its full sequence is Large ribosomal subunit protein uL1 (229 aa).

The protein belongs to the universal ribosomal protein uL1 family. Part of the 50S ribosomal subunit.

Its function is as follows. Binds directly to 23S rRNA. The L1 stalk is quite mobile in the ribosome, and is involved in E site tRNA release. Functionally, protein L1 is also a translational repressor protein, it controls the translation of the L11 operon by binding to its mRNA. The sequence is that of Large ribosomal subunit protein uL1 from Streptococcus gordonii (strain Challis / ATCC 35105 / BCRC 15272 / CH1 / DL1 / V288).